Here is a 544-residue protein sequence, read N- to C-terminus: Chaperonin GroEL (544 aa).

ATP-binding positions include 30–33 (TLGP), Lys-51, 87–91 (DGTTT), Gly-415, and Asp-495.

Belongs to the chaperonin (HSP60) family. As to quaternary structure, forms a cylinder of 14 subunits composed of two heptameric rings stacked back-to-back. Interacts with the co-chaperonin GroES.

The protein localises to the cytoplasm. It carries out the reaction ATP + H2O + a folded polypeptide = ADP + phosphate + an unfolded polypeptide.. Functionally, together with its co-chaperonin GroES, plays an essential role in assisting protein folding. The GroEL-GroES system forms a nano-cage that allows encapsulation of the non-native substrate proteins and provides a physical environment optimized to promote and accelerate protein folding. The polypeptide is Chaperonin GroEL (Aeromonas salmonicida (strain A449)).